The sequence spans 118 residues: UPF0342 protein BPUM_0928 (118 aa).

Belongs to the UPF0342 family.

This Bacillus pumilus (strain SAFR-032) protein is UPF0342 protein BPUM_0928.